The chain runs to 325 residues: NADH-quinone oxidoreductase subunit H (325 aa).

The next 8 helical transmembrane spans lie at 11-31 (ILLT…CGAF), 81-101 (VIFT…FAIV), 114-134 (IGIL…LFAG), 154-174 (LSYE…AGSF), 186-206 (VWNV…GVAV), 237-257 (FFVG…TLFF), 265-285 (LPPF…FILI), and 304-324 (ICLP…LWQA).

The protein belongs to the complex I subunit 1 family. In terms of assembly, NDH-1 is composed of 13 different subunits. Subunits NuoA, H, J, K, L, M, N constitute the membrane sector of the complex.

It is found in the cell inner membrane. It catalyses the reaction a quinone + NADH + 5 H(+)(in) = a quinol + NAD(+) + 4 H(+)(out). In terms of biological role, NDH-1 shuttles electrons from NADH, via FMN and iron-sulfur (Fe-S) centers, to quinones in the respiratory chain. The immediate electron acceptor for the enzyme in this species is believed to be ubiquinone. Couples the redox reaction to proton translocation (for every two electrons transferred, four hydrogen ions are translocated across the cytoplasmic membrane), and thus conserves the redox energy in a proton gradient. This subunit may bind ubiquinone. The sequence is that of NADH-quinone oxidoreductase subunit H from Shigella flexneri serotype 5b (strain 8401).